The primary structure comprises 140 residues: Nucleoside diphosphate kinase (140 aa).

Residues Lys-11, Phe-59, Arg-87, Thr-93, Arg-104, and Asn-114 each coordinate ATP. His-117 (pros-phosphohistidine intermediate) is an active-site residue.

It belongs to the NDK family. As to quaternary structure, homotetramer. Mg(2+) serves as cofactor.

The protein localises to the cytoplasm. The enzyme catalyses a 2'-deoxyribonucleoside 5'-diphosphate + ATP = a 2'-deoxyribonucleoside 5'-triphosphate + ADP. It carries out the reaction a ribonucleoside 5'-diphosphate + ATP = a ribonucleoside 5'-triphosphate + ADP. In terms of biological role, major role in the synthesis of nucleoside triphosphates other than ATP. The ATP gamma phosphate is transferred to the NDP beta phosphate via a ping-pong mechanism, using a phosphorylated active-site intermediate. The protein is Nucleoside diphosphate kinase of Granulibacter bethesdensis (strain ATCC BAA-1260 / CGDNIH1).